The sequence spans 739 residues: MSLMLEPNPTQIKEERIYAEMGLTDEEFAMVEKILGRLPNYTETGLFSVMWSEHCSYKNSKPVLRKFPTTGERVLQGPGEGAGIVDIGDNQAVVFKMESHNHPSAIEPYQGAATGVGGIIRDVFSMGARPVALLNSLRFGELQSPRVKYLFEEVVAGIAGYGNCIGIPTVGGEVQFDPCYEGNPLVNAMCVGLINHEDIKKGQAHGAGNTVMYVGASTGRDGIHGATFASEELSESSEAKRPAVQVGDPFMEKLLIEACLELIQSDALVGIQDMGAAGLTSSSAEMASKAGMGIEMYLDDVPQRETGMTPYEMMLSESQERMLIVVKKGREQEIVDLFEKYGLAAVTMGKVTEDKMLRLFHKDEMVAEVPADALAEEAPIYHKPSKEAAYFAEFQQMKMETPKVEDYKETLLALLQQPTIASKEWVYDQYDYQVRTSTIVTPGSDAAVIRVRGTEKGLAMTTDCNSRYIYLDPEVGGKIAVAEAARNIVCSGGEPLAITDCLNFGNPEKPEIFWQIEKSVDGMSEACRKLQTPVIGGNVSMYNERSGEAVYPTPTVGMVGLVHDLKHVTTQEFKQAGDLVYVIGETKAEFGGSELQKMIYGKIFGQSPSIDLDVELKRQKQVLAAIQAGLVQSAHDVAEGGLAVAITESAIGAKGLGATVKLDGEATAVLFAESQSRFVITVKRENKEAFEKAVEAIQVGEVTNTNEVTIHNEENEVLLTANVDEMRKAWKGAIPCLLK.

Residue H54 is part of the active site. ATP-binding residues include Y57 and K96. E98 serves as a coordination point for Mg(2+). Substrate is bound by residues 99–102 (SHNH) and R121. The active-site Proton acceptor is the H100. D122 contributes to the Mg(2+) binding site. Q245 provides a ligand contact to substrate. D273 is a binding site for Mg(2+). 317-319 (ESQ) contributes to the substrate binding site. ATP contacts are provided by D500 and G537. N538 contacts Mg(2+). S540 serves as a coordination point for substrate.

It belongs to the FGAMS family. In terms of assembly, monomer. Part of the FGAM synthase complex composed of 1 PurL, 1 PurQ and 2 PurS subunits.

It is found in the cytoplasm. The catalysed reaction is N(2)-formyl-N(1)-(5-phospho-beta-D-ribosyl)glycinamide + L-glutamine + ATP + H2O = 2-formamido-N(1)-(5-O-phospho-beta-D-ribosyl)acetamidine + L-glutamate + ADP + phosphate + H(+). Its pathway is purine metabolism; IMP biosynthesis via de novo pathway; 5-amino-1-(5-phospho-D-ribosyl)imidazole from N(2)-formyl-N(1)-(5-phospho-D-ribosyl)glycinamide: step 1/2. Part of the phosphoribosylformylglycinamidine synthase complex involved in the purines biosynthetic pathway. Catalyzes the ATP-dependent conversion of formylglycinamide ribonucleotide (FGAR) and glutamine to yield formylglycinamidine ribonucleotide (FGAM) and glutamate. The FGAM synthase complex is composed of three subunits. PurQ produces an ammonia molecule by converting glutamine to glutamate. PurL transfers the ammonia molecule to FGAR to form FGAM in an ATP-dependent manner. PurS interacts with PurQ and PurL and is thought to assist in the transfer of the ammonia molecule from PurQ to PurL. The chain is Phosphoribosylformylglycinamidine synthase subunit PurL from Bacillus mycoides (strain KBAB4) (Bacillus weihenstephanensis).